A 119-amino-acid chain; its full sequence is UPF0145 protein Bcep18194_B0595 (119 aa).

The protein belongs to the UPF0145 family.

The protein is UPF0145 protein Bcep18194_B0595 of Burkholderia lata (strain ATCC 17760 / DSM 23089 / LMG 22485 / NCIMB 9086 / R18194 / 383).